The following is a 184-amino-acid chain: Photosystem I assembly protein Ycf4 (184 aa).

The next 2 helical transmembrane spans lie at 22–42 (VCWAFILFLGSLGFLLVGTSS) and 57–77 (IIFFPQGIVMSFYGIAGLFIS).

The protein belongs to the Ycf4 family.

It localises to the plastid. The protein localises to the chloroplast thylakoid membrane. Functionally, seems to be required for the assembly of the photosystem I complex. This chain is Photosystem I assembly protein Ycf4, found in Morus indica (Mulberry).